The primary structure comprises 344 residues: Dihydroorotate dehydrogenase (quinone) (344 aa).

Residues 62–66 (AGLDK) and Thr86 each bind FMN. Lys66 lines the substrate pocket. 111-115 (NRMGF) is a substrate binding site. FMN is bound by residues Asn139 and Asn172. Asn172 contacts substrate. Ser175 (nucleophile) is an active-site residue. Asn177 contributes to the substrate binding site. 2 residues coordinate FMN: Lys217 and Thr245. 246 to 247 (NT) serves as a coordination point for substrate. FMN is bound by residues Gly268, Gly297, and 318-319 (YS).

The protein belongs to the dihydroorotate dehydrogenase family. Type 2 subfamily. As to quaternary structure, monomer. It depends on FMN as a cofactor.

The protein localises to the cell membrane. It catalyses the reaction (S)-dihydroorotate + a quinone = orotate + a quinol. The protein operates within pyrimidine metabolism; UMP biosynthesis via de novo pathway; orotate from (S)-dihydroorotate (quinone route): step 1/1. Its function is as follows. Catalyzes the conversion of dihydroorotate to orotate with quinone as electron acceptor. The sequence is that of Dihydroorotate dehydrogenase (quinone) from Chromobacterium violaceum (strain ATCC 12472 / DSM 30191 / JCM 1249 / CCUG 213 / NBRC 12614 / NCIMB 9131 / NCTC 9757 / MK).